We begin with the raw amino-acid sequence, 501 residues long: Dipeptide and tripeptide permease B (501 aa).

Over 1–27 (MRPSAPTGLLQQPKPFFMIFFVELWER) the chain is Cytoplasmic. A helical transmembrane segment spans residues 28-48 (FGYYGVQGILAVFFVQQLGFS). Residues 49–52 (QEQS) lie on the Periplasmic side of the membrane. The helical transmembrane segment at 53–73 (FITFGAFSALVYGLISVGGYV) threads the bilayer. Residues 74–82 (GDHVLGTKR) are Cytoplasmic-facing. The helical transmembrane segment at 83–103 (TMVLGAIVLVIGYFMTGMSIY) threads the bilayer. At 104–106 (NPD) the chain is on the periplasmic side. A helical membrane pass occupies residues 107 to 127 (LIFYALGTIAVGNCLFKANPA). Over 128-146 (SLLAKCYERGDPRLDGAFT) the chain is Cytoplasmic. The helical transmembrane segment at 147–167 (LFYMSINIGSLISLSLAPVIA) threads the bilayer. Topologically, residues 168 to 172 (DHYGY) are periplasmic. A helical transmembrane segment spans residues 173–193 (TVTYNLCGVGLVIALLTFFAC). Over 194 to 211 (RHMVRDIGSEPDHLPLDY) the chain is Cytoplasmic. A helical transmembrane segment spans residues 212-232 (GKLLLVLLGSVALVFFCAWLM). His-233 is a topological domain (periplasmic). The chain crosses the membrane as a helical span at residues 234 to 254 (HVVIANMVLMTVTLAVVIFFF). The Cytoplasmic portion of the chain corresponds to 255-267 (REAFKLDAVARNK). A helical membrane pass occupies residues 268 to 288 (MYVAFVLMLEAVVFYVLYAQM). At 289-311 (PTSLNFFAINNMHHEMLGMSVNP) the chain is on the periplasmic side. Residues 312 to 332 (ISFQALNPFWVVVGSPVLAMI) form a helical membrane-spanning segment. Over 333–350 (YTRLGSKGRDLTMPLKFT) the chain is Cytoplasmic. Residues 351 to 371 (LGMLFCSLGFLTAAASGIWFA) form a helical membrane-spanning segment. Residues 372 to 380 (DAQGLTSPW) lie on the Periplasmic side of the membrane. A helical transmembrane segment spans residues 381–401 (FMVLIYLFQSLGELMISALGL). The Cytoplasmic segment spans residues 402–411 (AMVAALVPQR). The chain crosses the membrane as a helical span at residues 412–432 (LMGFILGMWFLTQAMASLLGG). Over 433-456 (YVATFTAVPQGVTDPLQTLPIYTD) the chain is Periplasmic. A helical transmembrane segment spans residues 457 to 477 (VFGKIGLVTLLVAVVMALMVP). Residues 478–501 (WLNRMMHAGQGEEGEDLLSQQAKA) lie on the Cytoplasmic side of the membrane.

The protein belongs to the major facilitator superfamily. Proton-dependent oligopeptide transporter (POT/PTR) (TC 2.A.17) family. DtpB subfamily.

It is found in the cell inner membrane. In terms of biological role, proton-dependent permease that transports di- and tripeptides. The sequence is that of Dipeptide and tripeptide permease B from Aeromonas hydrophila subsp. hydrophila (strain ATCC 7966 / DSM 30187 / BCRC 13018 / CCUG 14551 / JCM 1027 / KCTC 2358 / NCIMB 9240 / NCTC 8049).